A 79-amino-acid polypeptide reads, in one-letter code: DNA-directed RNA polymerase subunit omega (79 aa).

Belongs to the RNA polymerase subunit omega family. The RNAP catalytic core consists of 2 alpha, 1 beta, 1 beta' and 1 omega subunit. When a sigma factor is associated with the core the holoenzyme is formed, which can initiate transcription.

It carries out the reaction RNA(n) + a ribonucleoside 5'-triphosphate = RNA(n+1) + diphosphate. Functionally, promotes RNA polymerase assembly. Latches the N- and C-terminal regions of the beta' subunit thereby facilitating its interaction with the beta and alpha subunits. The protein is DNA-directed RNA polymerase subunit omega of Thermotoga petrophila (strain ATCC BAA-488 / DSM 13995 / JCM 10881 / RKU-1).